Here is a 96-residue protein sequence, read N- to C-terminus: Large ribosomal subunit protein bL27 (96 aa).

Positions 1-9 (MLRLDLQFF) are excised as a propeptide.

It belongs to the bacterial ribosomal protein bL27 family. The N-terminus is cleaved by ribosomal processing cysteine protease Prp.

This Anoxybacillus flavithermus (strain DSM 21510 / WK1) protein is Large ribosomal subunit protein bL27.